The following is a 198-amino-acid chain: Transcription factor LBX2 (198 aa).

Disordered stretches follow at residues 24-46, 63-89, and 173-198; these read MVPRAPSAPQLPESGPGPTSPLC, ALQPSEGRAGPDALGPGPFGRKRRKSR, and DPGLCLGPAGPDSRPHLSDEEIQVDD. The segment at residues 85–144 is a DNA-binding region (homeobox); the sequence is RRKSRTAFTAQQVLELERRFVFQKYLAPSERDGLATRLGLANAQVVTWFQNRRAKLKRDV.

It is found in the nucleus. Functionally, transcription factor. In Homo sapiens (Human), this protein is Transcription factor LBX2 (LBX2).